The primary structure comprises 427 residues: MTAIVIVGAQWGDEGKGKVVDLYTESADLVVRYAGGPNAGHTLVVGGEKLIVRLIPSGILRSNARCVMAQGMVVDPGVLVSEIDAVEARGCSTQGRLFVSDRAHLILPFHPLVDSLREAAAADGVRLGTTKRGIGPCYEDKASRRGARLGDLRDMKRLAQLVSRSLEAWTPTLRALGGEPPSLDAILDELTPLAKRITPLLADTSQLIDGALRRGERVLLEGAQGTLLDIDHGTFPFVTSSSAIAGGACVGAGVGPTRIRRVLGLAKAYCTRVGEGPFPTELDGPLGERLRSVGGEYGSVTGRPRRTGWLDLPALRYAARVNGLDGIALTKLDVLTGMPELKVCVAYDTPSGRTREFPIDDIATAKPVLETVAEWSEPIDAARSMTELPAAARHYVEMVEKETGVPVDVVSVGADREATIVRRNAFA.

GTP-binding positions include 12–18 (GDEGKGK) and 40–42 (GHT). Catalysis depends on Asp-13, which acts as the Proton acceptor. Mg(2+) contacts are provided by Asp-13 and Gly-40. IMP-binding positions include 13–16 (DEGK), 38–41 (NAGH), Thr-130, Arg-144, Gln-224, Thr-239, and Arg-303. Residue His-41 is the Proton donor of the active site. 299-305 (SVTGRPR) lines the substrate pocket. GTP-binding positions include Arg-305, 331–333 (KLD), and 411–413 (SVG).

This sequence belongs to the adenylosuccinate synthetase family. Homodimer. The cofactor is Mg(2+).

It is found in the cytoplasm. The enzyme catalyses IMP + L-aspartate + GTP = N(6)-(1,2-dicarboxyethyl)-AMP + GDP + phosphate + 2 H(+). It functions in the pathway purine metabolism; AMP biosynthesis via de novo pathway; AMP from IMP: step 1/2. Its function is as follows. Plays an important role in the de novo pathway of purine nucleotide biosynthesis. Catalyzes the first committed step in the biosynthesis of AMP from IMP. The protein is Adenylosuccinate synthetase of Sorangium cellulosum (strain So ce56) (Polyangium cellulosum (strain So ce56)).